Reading from the N-terminus, the 214-residue chain is Exosome complex component RRP46 homolog (214 aa).

This sequence belongs to the RNase PH family. Homodimer. Component of the RNA exosome complex. Interacts with crn-4; interaction promotes the DNase activity of crn-4. Interacts with crn-3, cps-6 and cyn-13.

Its subcellular location is the cytoplasm. The protein resides in the nucleus. Functionally, non-catalytic component of the RNA exosome complex which has 3'-&gt;5' exoribonuclease activity and participates in a multitude of cellular RNA processing and degradation events. Involved in apoptotic DNA degradation. In vitro, does not bind or digest single-stranded RNA. In vitro, binds to double-stranded DNA without detectable DNase activity. This is Exosome complex component RRP46 homolog from Caenorhabditis elegans.